Consider the following 315-residue polypeptide: Ribosome biogenesis protein BRX1 homolog 1 (315 aa).

The interval 1–35 is disordered; the sequence is MGRKRKHSETVTAAPVKDSAPERPQRTLLGWKDKK. Residues 19–35 are compositionally biased toward basic and acidic residues; that stretch reads SAPERPQRTLLGWKDKK. The 204-residue stretch at 53 to 256 folds into the Brix domain; sequence EKVLVTCSRR…PIKIFGGSFG (204 aa).

The protein belongs to the BRX1 family. Expressed in roots, rosette leaves, stems, flowers, siliques and seeds.

The protein resides in the nucleus. Its subcellular location is the nucleolus. In terms of biological role, involved in pre-rRNA processing and required for biogenesis of the large (60S) ribosomal subunit. Required for proper development. The sequence is that of Ribosome biogenesis protein BRX1 homolog 1 from Arabidopsis thaliana (Mouse-ear cress).